Consider the following 360-residue polypeptide: Protein phosphatase 1 regulatory subunit 7 (360 aa).

Residues 1-65 (MAAERGAGQQ…DEDPEEGQEL (65 aa)) are disordered. Alanine 2 carries the post-translational modification N-acetylalanine. Phosphoserine occurs at positions 12, 24, 27, 44, and 47. Positions 17–34 (EVDRRVESEESGDEEGKK) are enriched in basic and acidic residues. Acidic residues predominate over residues 53–63 (ERGDEDPEEGQ). LRR repeat units lie at residues 77-98 (DAED…EVLK), 99-120 (KVKT…EGLQ), 121-142 (SLRE…DALT), 143-164 (ELEV…DKLT), 165-186 (RLKK…SSLH), 187-208 (QLQM…DTLT), 209-230 (NLES…DALT), 231-252 (NLTV…QSLV), 253-274 (NLRE…DNNN), 275-296 (KLTM…SHLT), and 297-318 (ELQE…DELK). A Phosphoserine modification is found at serine 322. The LRRCT domain maps to 331–360 (NPLQRDPQYRRKIMLALPSVRQIDATFVRF).

The protein belongs to the SDS22 family. As to quaternary structure, interacts with PPP1CA, PPP1CB and PPP1CC/PPP1G. Interacts with PPP1CC isoform 2 in motile caudal epididymal spermatozoa. As to expression, expressed in epididymal spermatozoa including the principal piece of the flagellum and the head-neck junction.

Its subcellular location is the nucleus. Its function is as follows. Regulatory subunit of protein phosphatase 1. Inactivates the PPP1CC isoform 2 during epididymal sperm maturation. In Bos taurus (Bovine), this protein is Protein phosphatase 1 regulatory subunit 7 (PPP1R7).